The sequence spans 65 residues: Large ribosomal subunit protein bL35 (65 aa).

This sequence belongs to the bacterial ribosomal protein bL35 family.

The chain is Large ribosomal subunit protein bL35 from Geobacter sp. (strain M21).